The chain runs to 476 residues: Alkaline phosphatase H (476 aa).

The first 26 residues, 1-26 (MTPGYPLALSLAVSMAVLGSALPAQA), serve as a signal peptide directing secretion. D77 serves as a coordination point for Mg(2+). Zn(2+) is bound at residue D77. Residue S128 is the Phosphoserine intermediate of the active site. S128 is subject to Phosphoserine. Residues D179 and T181 each contribute to the Mg(2+) site. Position 206 is a phosphoserine (S206). Q346 is a Mg(2+) binding site. Positions 353, 357, 395, 396, and 438 each coordinate Zn(2+).

It belongs to the alkaline phosphatase family. Mg(2+) serves as cofactor. It depends on Zn(2+) as a cofactor.

Its subcellular location is the secreted. The protein resides in the periplasm. It carries out the reaction a phosphate monoester + H2O = an alcohol + phosphate. Functionally, has only phosphomonoesterase activity. This chain is Alkaline phosphatase H (phoA), found in Pseudomonas aeruginosa (strain UCBPP-PA14).